Reading from the N-terminus, the 1086-residue chain is NAD(P) transhydrogenase, mitochondrial (1086 aa).

The N-terminal 43 residues, 1–43 (MANLLKTVVTGCSCPFLSNLGSCKVLPGKKNFLRTFHTHRILW), are a transit peptide targeting the mitochondrion. The Mitochondrial matrix portion of the chain corresponds to 44–474 (CSAPVKPGIP…TITPFRKTMT (431 aa)). Position 70 is an N6-acetyllysine (Lys70). N6-succinyllysine is present on Lys117. 182 to 184 (RVT) lines the NAD(+) pocket. Lys224 carries the N6-succinyllysine modification. NAD(+)-binding positions include Val237, 257–259 (DTR), and Gly287. Residue Lys294 is modified to N6-succinyllysine. NAD(+)-binding residues include Glu300 and Leu319. Lys331 bears the N6-succinyllysine mark. At Lys397 the chain carries N6-acetyllysine. 4 helical membrane passes run 475–493 (SASV…GIAA), 501–521 (MVTT…GVTP), 527–546 (LMSV…LVLM), and 558–578 (GLAA…FLVT). Over 579 to 595 (QRMLDMFKRPTDPPEYN) the chain is Mitochondrial matrix. The next 5 membrane-spanning stretches (helical) occupy residues 596-616 (YLYL…LYSG), 622-642 (IMYL…STQG), 646-666 (LGNA…LGGL), 672-691 (LLAQ…LTIA), and 702-722 (LVAA…IAEY). Over 723–739 (IIEYPHFATDAAANLTK) the chain is Cytoplasmic. The next 5 helical transmembrane spans lie at 740 to 760 (IVAY…LVAY), 778 to 797 (HLLN…PFMM), 801 to 819 (FTTG…AVMG), 833 to 853 (VVIT…GFLL), and 857 to 879 (LLTI…MCVA). The Mitochondrial matrix portion of the chain corresponds to 880-1086 (MNRSLANVIL…QAKVRESYQK (207 aa)). NADP(+) contacts are provided by residues Tyr933, 965–970 (VAGRMP), 1009–1011 (NDT), 1026–1027 (GM), 1042–1049 (KRSLGVGY), and 1068–1069 (DA). Lys1079 carries the N6-succinyllysine modification.

The protein in the N-terminal section; belongs to the AlaDH/PNT family. It in the C-terminal section; belongs to the PNT beta subunit family. As to quaternary structure, homodimer.

It is found in the mitochondrion inner membrane. It catalyses the reaction NAD(+) + NADPH + H(+)(in) = NADH + NADP(+) + H(+)(out). The transhydrogenation between NADH and NADP is coupled to respiration and ATP hydrolysis and functions as a proton pump across the membrane. May play a role in reactive oxygen species (ROS) detoxification in the adrenal gland. This is NAD(P) transhydrogenase, mitochondrial (NNT) from Bos taurus (Bovine).